Reading from the N-terminus, the 243-residue chain is Small ribosomal subunit protein eS4 (243 aa).

Residues 43 to 105 (IPLIYIVRDY…TGEHYRVLPN (63 aa)) enclose the S4 RNA-binding domain.

It belongs to the eukaryotic ribosomal protein eS4 family. Part of the 30S ribosomal subunit.

This chain is Small ribosomal subunit protein eS4, found in Thermococcus kodakarensis (strain ATCC BAA-918 / JCM 12380 / KOD1) (Pyrococcus kodakaraensis (strain KOD1)).